A 1801-amino-acid polypeptide reads, in one-letter code: U3 small nucleolar RNA-associated protein 10 (1801 aa).

2 helical membrane-spanning segments follow: residues 102-122 (LALV…EWLI) and 136-156 (ILTF…AILP). The HEAT 1 repeat unit spans residues 581–619 (DVDVQALLPFMLIALADPSERVRSGAVDALANIGKVVDK). The next 2 membrane-spanning stretches (helical) occupy residues 939-959 (IQSG…AIVN) and 995-1015 (ALLL…HSVM). HEAT repeat units follow at residues 1038 to 1076 (DQTI…AFEH), 1110 to 1148 (YSMD…DSLK), 1244 to 1282 (TLTT…QSPE), 1288 to 1327 (QTRM…KYGK), and 1756 to 1794 (LALL…VLGE).

The protein belongs to the HEATR1/UTP10 family. Component of the ribosomal small subunit (SSU) processome.

Its subcellular location is the nucleus. It localises to the nucleolus. The protein localises to the membrane. In terms of biological role, involved in nucleolar processing of pre-18S ribosomal RNA. Involved in ribosome biosynthesis. The protein is U3 small nucleolar RNA-associated protein 10 of Emericella nidulans (strain FGSC A4 / ATCC 38163 / CBS 112.46 / NRRL 194 / M139) (Aspergillus nidulans).